We begin with the raw amino-acid sequence, 235 residues long: MSEILCTICARGGSKGVKNKNIRKINDLEMIAYSIIQAKNSKLFKHIVISTDSEEIAKIALKYGGEVFFKREAHLASDTAAKIPVMRDALLRSEEYFKCQFDTLIDLDASAPLRSSADIIKAFETFCQNQNDNLITAVPARRNPYFNLIEVQDGKVVKSKSGNFTTRQSVPKCYDMNASIYIFKRDFLLQNDSVFGKNTGLFIMDESTAFDVDSELDFKIVEFLIKEKNLQAKDF.

It belongs to the CMP-NeuNAc synthase family.

In terms of biological role, required for biosynthesis of LAH modification in the post-translational modification of Campylobacter coli flagellin. The sequence is that of Post-translational flagellin modification protein B (ptmB) from Campylobacter coli.